A 236-amino-acid chain; its full sequence is Small ribosomal subunit protein uS2c (236 aa).

The protein belongs to the universal ribosomal protein uS2 family.

It is found in the plastid. It localises to the chloroplast. This Populus alba (White poplar) protein is Small ribosomal subunit protein uS2c (rps2).